The primary structure comprises 596 residues: Fructan 1-exohydrolase w3 (596 aa).

The first 20 residues, 1–20, serve as a signal peptide directing secretion; sequence MAQAWAFLLPVLVLGSYVTS. The active site involves Asp-75. Asn-168, Asn-236, and Asn-248 each carry an N-linked (GlcNAc...) asparagine glycan. Cysteines 446 and 492 form a disulfide.

This sequence belongs to the glycosyl hydrolase 32 family. As to expression, expressed in the stem, particularly the penultimate internode. Little expression is detected in roots and in the peduncle part of the stem.

It carries out the reaction Hydrolysis of terminal, non-reducing (2-&gt;1)-linked beta-D-fructofuranose residues in fructans.. With respect to regulation, inhibited by sucrose. Hydrolyzes inulin-type beta-(2,1)-fructans and beta-(2,1)-linkages in branched fructans. Has low activity against beta-(2,6)-linked fructans. May play a role as a beta-(2,1)-trimmer during graminan biosynthesis. The sequence is that of Fructan 1-exohydrolase w3 from Triticum aestivum (Wheat).